Here is a 56-residue protein sequence, read N- to C-terminus: Small ribosomal subunit protein uS14 (56 aa).

Positions 21, 24, 39, and 42 each coordinate Zn(2+).

Belongs to the universal ribosomal protein uS14 family. Zn(2+) is required as a cofactor.

In Griffithsia japonica (Red alga), this protein is Small ribosomal subunit protein uS14 (RPS29).